The primary structure comprises 157 residues: Transcriptional repressor NrdR (157 aa).

Residues 3 to 34 (CPFCNTVDTKVIDSRLVSEGSQIKRRRQCAIC) fold into a zinc finger. The region spanning 49 to 139 (PRVIKNDDLL…VYRSFEDVRE (91 aa)) is the ATP-cone domain.

It belongs to the NrdR family. Zn(2+) serves as cofactor.

Negatively regulates transcription of bacterial ribonucleotide reductase nrd genes and operons by binding to NrdR-boxes. The sequence is that of Transcriptional repressor NrdR from Hamiltonella defensa subsp. Acyrthosiphon pisum (strain 5AT).